Consider the following 480-residue polypeptide: Adenosylhomocysteinase (480 aa).

Thr-63, Asp-142, and Glu-203 together coordinate substrate. 204–206 (TTT) contributes to the NAD(+) binding site. Substrate is bound by residues Lys-233 and Asp-237. NAD(+) is bound by residues Asn-238, 267 to 272 (GYGDVG), Glu-290, Asn-325, 346 to 348 (IGH), and Asn-394.

It belongs to the adenosylhomocysteinase family. Requires NAD(+) as cofactor.

The protein localises to the cytoplasm. The enzyme catalyses S-adenosyl-L-homocysteine + H2O = L-homocysteine + adenosine. It participates in amino-acid biosynthesis; L-homocysteine biosynthesis; L-homocysteine from S-adenosyl-L-homocysteine: step 1/1. Its function is as follows. May play a key role in the regulation of the intracellular concentration of adenosylhomocysteine. In Xylella fastidiosa (strain Temecula1 / ATCC 700964), this protein is Adenosylhomocysteinase.